The sequence spans 538 residues: CTP synthase (538 aa).

The tract at residues 1–269 (MSPRKYVIVT…ARLVERRLFG (269 aa)) is amidoligase domain. CTP is bound at residue Ser-15. Position 15 (Ser-15) interacts with UTP. Residue 16-21 (SVGKGL) participates in ATP binding. Tyr-56 contributes to the L-glutamine binding site. Residue Asp-73 participates in ATP binding. Positions 73 and 143 each coordinate Mg(2+). CTP is bound by residues 150–152 (DIE), 190–195 (KTKPVQ), and Lys-226. UTP-binding positions include 190 to 195 (KTKPVQ) and Lys-226. In terms of domain architecture, Glutamine amidotransferase type-1 spans 294 to 538 (KVAMVGKYTK…FVTAVARLRG (245 aa)). Position 358 (Gly-358) interacts with L-glutamine. Cys-385 (nucleophile; for glutamine hydrolysis) is an active-site residue. Residues 386 to 389 (FGMQ), Glu-409, and Arg-466 each bind L-glutamine. Residues His-512 and Glu-514 contribute to the active site.

This sequence belongs to the CTP synthase family. Homotetramer.

It catalyses the reaction UTP + L-glutamine + ATP + H2O = CTP + L-glutamate + ADP + phosphate + 2 H(+). The enzyme catalyses L-glutamine + H2O = L-glutamate + NH4(+). The catalysed reaction is UTP + NH4(+) + ATP = CTP + ADP + phosphate + 2 H(+). It functions in the pathway pyrimidine metabolism; CTP biosynthesis via de novo pathway; CTP from UDP: step 2/2. Allosterically activated by GTP, when glutamine is the substrate; GTP has no effect on the reaction when ammonia is the substrate. The allosteric effector GTP functions by stabilizing the protein conformation that binds the tetrahedral intermediate(s) formed during glutamine hydrolysis. Inhibited by the product CTP, via allosteric rather than competitive inhibition. Functionally, catalyzes the ATP-dependent amination of UTP to CTP with either L-glutamine or ammonia as the source of nitrogen. Regulates intracellular CTP levels through interactions with the four ribonucleotide triphosphates. The sequence is that of CTP synthase from Aeropyrum pernix (strain ATCC 700893 / DSM 11879 / JCM 9820 / NBRC 100138 / K1).